The primary structure comprises 183 residues: ATP synthase subunit b, chloroplastic (183 aa).

The helical transmembrane segment at 27-49 threads the bilayer; that stretch reads LATNLINLTVVVGVLIYFGKGVL.

It belongs to the ATPase B chain family. In terms of assembly, F-type ATPases have 2 components, F(1) - the catalytic core - and F(0) - the membrane proton channel. F(1) has five subunits: alpha(3), beta(3), gamma(1), delta(1), epsilon(1). F(0) has four main subunits: a(1), b(1), b'(1) and c(10-14). The alpha and beta chains form an alternating ring which encloses part of the gamma chain. F(1) is attached to F(0) by a central stalk formed by the gamma and epsilon chains, while a peripheral stalk is formed by the delta, b and b' chains.

The protein localises to the plastid. It is found in the chloroplast thylakoid membrane. In terms of biological role, f(1)F(0) ATP synthase produces ATP from ADP in the presence of a proton or sodium gradient. F-type ATPases consist of two structural domains, F(1) containing the extramembraneous catalytic core and F(0) containing the membrane proton channel, linked together by a central stalk and a peripheral stalk. During catalysis, ATP synthesis in the catalytic domain of F(1) is coupled via a rotary mechanism of the central stalk subunits to proton translocation. Functionally, component of the F(0) channel, it forms part of the peripheral stalk, linking F(1) to F(0). This is ATP synthase subunit b, chloroplastic from Oryza nivara (Indian wild rice).